The primary structure comprises 352 residues: UDP-N-acetylglucosamine--N-acetylmuramyl-(pentapeptide) pyrophosphoryl-undecaprenol N-acetylglucosamine transferase (352 aa).

Residues Ser-195 and Gln-287 each coordinate UDP-N-acetyl-alpha-D-glucosamine.

It belongs to the glycosyltransferase 28 family. MurG subfamily.

It is found in the cell membrane. The catalysed reaction is Mur2Ac(oyl-L-Ala-gamma-D-Glu-L-Lys-D-Ala-D-Ala)-di-trans,octa-cis-undecaprenyl diphosphate + UDP-N-acetyl-alpha-D-glucosamine = beta-D-GlcNAc-(1-&gt;4)-Mur2Ac(oyl-L-Ala-gamma-D-Glu-L-Lys-D-Ala-D-Ala)-di-trans,octa-cis-undecaprenyl diphosphate + UDP + H(+). Its pathway is cell wall biogenesis; peptidoglycan biosynthesis. Cell wall formation. Catalyzes the transfer of a GlcNAc subunit on undecaprenyl-pyrophosphoryl-MurNAc-pentapeptide (lipid intermediate I) to form undecaprenyl-pyrophosphoryl-MurNAc-(pentapeptide)GlcNAc (lipid intermediate II). This chain is UDP-N-acetylglucosamine--N-acetylmuramyl-(pentapeptide) pyrophosphoryl-undecaprenol N-acetylglucosamine transferase, found in Streptococcus pneumoniae (strain 70585).